Reading from the N-terminus, the 86-residue chain is RNA-binding protein Hfq (86 aa).

Residues 9-68 (DPYLNTLRKEKVPVSIYLVNGIKLQGSIESFDQFVVLLKNTVSQMVYKHAISTVVPARPV) form the Sm domain. The interval 67 to 86 (PVRLPSPTDGEHGDSEPGNA) is disordered. A compositionally biased stretch (basic and acidic residues) spans 75 to 86 (DGEHGDSEPGNA).

Belongs to the Hfq family. As to quaternary structure, homohexamer.

RNA chaperone that binds small regulatory RNA (sRNAs) and mRNAs to facilitate mRNA translational regulation in response to envelope stress, environmental stress and changes in metabolite concentrations. Also binds with high specificity to tRNAs. This is RNA-binding protein Hfq from Pseudomonas putida (strain GB-1).